The sequence spans 225 residues: Transmembrane protein C16orf54 homolog (225 aa).

The chain crosses the membrane as a helical span at residues 34 to 54; it reads IPIMLGLASLTAFFIITTAVL. Residues 107–149 form a disordered region; the sequence is RAPDPPTPGGTLEGRATAPPAIPTPHPSPSSLVPQTPPEVPAQ. A phosphothreonine mark is found at T113 and T117. S195 is modified (phosphoserine).

Its subcellular location is the membrane. This is Transmembrane protein C16orf54 homolog from Rattus norvegicus (Rat).